The following is a 406-amino-acid chain: Putative nickel insertion protein (406 aa).

It belongs to the LarC family.

This Methanosphaera stadtmanae (strain ATCC 43021 / DSM 3091 / JCM 11832 / MCB-3) protein is Putative nickel insertion protein.